The primary structure comprises 415 residues: Gamma-glutamyl phosphate reductase (415 aa).

The protein belongs to the gamma-glutamyl phosphate reductase family.

Its subcellular location is the cytoplasm. The catalysed reaction is L-glutamate 5-semialdehyde + phosphate + NADP(+) = L-glutamyl 5-phosphate + NADPH + H(+). The protein operates within amino-acid biosynthesis; L-proline biosynthesis; L-glutamate 5-semialdehyde from L-glutamate: step 2/2. Catalyzes the NADPH-dependent reduction of L-glutamate 5-phosphate into L-glutamate 5-semialdehyde and phosphate. The product spontaneously undergoes cyclization to form 1-pyrroline-5-carboxylate. This Dictyoglomus turgidum (strain DSM 6724 / Z-1310) protein is Gamma-glutamyl phosphate reductase.